We begin with the raw amino-acid sequence, 353 residues long: Probable G-protein coupled receptor 139 (353 aa).

The Extracellular portion of the chain corresponds to 1–29; that stretch reads MEHTHAHLAANSSLSWWSPGSACGLGFVP. Asn11 carries an N-linked (GlcNAc...) asparagine glycan. The chain crosses the membrane as a helical span at residues 30–50; it reads VVYYSLLLCLGLPANILTVII. Residues 51-65 lie on the Cytoplasmic side of the membrane; that stretch reads LSQLVARRQKSSYNY. A helical transmembrane segment spans residues 66-86; sequence LLALAAADILVLFFIVFVDFL. Residues 87-102 are Extracellular-facing; it reads LEDFILNMQMPQVPDK. The helical transmembrane segment at 103–123 threads the bilayer; it reads IIEVLEFSSIHTSIWITVPLT. The Cytoplasmic segment spans residues 124-148; that stretch reads IDRYIAVCHPLKYHTVSYPARTRKV. Residues 149-169 traverse the membrane as a helical segment; sequence IVSVYITCFLTSIPYYWWPNI. At 170–181 the chain is on the extracellular side; the sequence is WTEDYISTSVHH. A helical transmembrane segment spans residues 182–202; that stretch reads VLIWIHCFTVYLVPCSIFFIL. At 203 to 228 the chain is on the cytoplasmic side; sequence NSIIVYKLRRKSNFRLRGYSTGKTTA. Residues 229–249 form a helical membrane-spanning segment; sequence ILFTITSIFATLWAPRIIMIL. Residues 250-268 lie on the Extracellular side of the membrane; the sequence is YHLYGAPIQNRWLVHIMSD. The chain crosses the membrane as a helical span at residues 269–289; the sequence is IANMLALLNTAINFFLYCFIS. The Cytoplasmic portion of the chain corresponds to 290-353; sequence KRFRTMAAAT…KNGKPIKVSP (64 aa).

This sequence belongs to the G-protein coupled receptor 1 family. In terms of tissue distribution, expressed almost exclusively in the brain. Detected at very low levels in the peripheral tissues.

The protein localises to the cell membrane. In terms of biological role, orphan receptor. Seems to act through a G(q/11)-mediated pathway. In Homo sapiens (Human), this protein is Probable G-protein coupled receptor 139 (GPR139).